Consider the following 198-residue polypeptide: Ribosomal RNA small subunit methyltransferase G (198 aa).

S-adenosyl-L-methionine-binding positions include G74, F79, 123-124 (IQ), and R136.

It belongs to the methyltransferase superfamily. RNA methyltransferase RsmG family.

It is found in the cytoplasm. It carries out the reaction guanosine(527) in 16S rRNA + S-adenosyl-L-methionine = N(7)-methylguanosine(527) in 16S rRNA + S-adenosyl-L-homocysteine. Functionally, specifically methylates the N7 position of guanine in position 527 of 16S rRNA. The polypeptide is Ribosomal RNA small subunit methyltransferase G (Orientia tsutsugamushi (strain Ikeda) (Rickettsia tsutsugamushi)).